Reading from the N-terminus, the 360-residue chain is Transcription elongation factor, mitochondrial (360 aa).

The transit peptide at 1-35 (MSGSVLFTAGERWRCFLTPSRSSLYWALHNFCCRK) directs the protein to the mitochondrion.

The protein belongs to the TEFM family. In terms of assembly, interacts with POLRMT.

The protein localises to the mitochondrion matrix. It is found in the mitochondrion nucleoid. Transcription elongation factor which increases mitochondrial RNA polymerase processivity. Regulates transcription of the mitochondrial genome, including genes important for the oxidative phosphorylation machinery. The chain is Transcription elongation factor, mitochondrial (TEFM) from Homo sapiens (Human).